The following is a 396-amino-acid chain: Acetate kinase (396 aa).

N7 is a Mg(2+) binding site. An ATP-binding site is contributed by K14. R86 lines the substrate pocket. Residue D143 is the Proton donor/acceptor of the active site. ATP-binding positions include 203-207 (HLGNG), 277-279 (DMR), and 325-329 (GIGEH). E380 serves as a coordination point for Mg(2+).

Belongs to the acetokinase family. In terms of assembly, homodimer. Mg(2+) serves as cofactor. Requires Mn(2+) as cofactor.

The protein localises to the cytoplasm. It carries out the reaction acetate + ATP = acetyl phosphate + ADP. It functions in the pathway metabolic intermediate biosynthesis; acetyl-CoA biosynthesis; acetyl-CoA from acetate: step 1/2. Its function is as follows. Catalyzes the formation of acetyl phosphate from acetate and ATP. Can also catalyze the reverse reaction. This is Acetate kinase from Sulfurovum sp. (strain NBC37-1).